A 556-amino-acid polypeptide reads, in one-letter code: Formate--tetrahydrofolate ligase (556 aa).

ATP is bound at residue 65–72; the sequence is TPAGEGKS.

This sequence belongs to the formate--tetrahydrofolate ligase family.

It catalyses the reaction (6S)-5,6,7,8-tetrahydrofolate + formate + ATP = (6R)-10-formyltetrahydrofolate + ADP + phosphate. It functions in the pathway one-carbon metabolism; tetrahydrofolate interconversion. The protein is Formate--tetrahydrofolate ligase of Streptococcus uberis (strain ATCC BAA-854 / 0140J).